The sequence spans 244 residues: 5-oxoprolinase subunit A (244 aa).

The protein belongs to the LamB/PxpA family. Forms a complex composed of PxpA, PxpB and PxpC.

It catalyses the reaction 5-oxo-L-proline + ATP + 2 H2O = L-glutamate + ADP + phosphate + H(+). Catalyzes the cleavage of 5-oxoproline to form L-glutamate coupled to the hydrolysis of ATP to ADP and inorganic phosphate. This chain is 5-oxoprolinase subunit A, found in Escherichia coli (strain K12).